Reading from the N-terminus, the 177-residue chain is Peptidyl-prolyl cis-trans isomerase H (177 aa).

N-acetylalanine is present on Ala-2. Residues 14–176 form the PPIase cyclophilin-type domain; it reads FFDVSIGGQE…LPVVISQCGE (163 aa).

It belongs to the cyclophilin-type PPIase family. PPIase H subfamily. As to quaternary structure, interacts directly with PRPF4. Part of a heteromeric complex containing PPIH, PRPF3 and PRPF4 that is stable in the absence of RNA. Component of the U4/U6-U5 tri-snRNP complex composed of the U4, U6 and U5 snRNAs and at least PRPF3, PRPF4, PRPF6, PRPF8, PRPF31, SNRNP200, TXNL4A, SNRNP40, DDX23, CD2BP2, PPIH, SNU13, EFTUD2, SART1 and USP39. Heterodimer with PRPF18.

It localises to the nucleus speckle. The protein localises to the cytoplasm. It catalyses the reaction [protein]-peptidylproline (omega=180) = [protein]-peptidylproline (omega=0). Its activity is regulated as follows. Inhibited by cyclosporin A. Functionally, PPIase that catalyzes the cis-trans isomerization of proline imidic peptide bonds in oligopeptides and may therefore assist protein folding. Participates in pre-mRNA splicing. May play a role in the assembly of the U4/U5/U6 tri-snRNP complex, one of the building blocks of the spliceosome. May act as a chaperone. This Homo sapiens (Human) protein is Peptidyl-prolyl cis-trans isomerase H (PPIH).